The primary structure comprises 273 residues: Small ribosomal subunit protein eS1 (273 aa).

Belongs to the eukaryotic ribosomal protein eS1 family. As to quaternary structure, component of the small ribosomal subunit. Mature ribosomes consist of a small (40S) and a large (60S) subunit. The 40S subunit contains about 33 different proteins and 1 molecule of RNA (18S). The 60S subunit contains about 49 different proteins and 3 molecules of RNA (25S, 5.8S and 5S).

The protein resides in the cytoplasm. The protein is Small ribosomal subunit protein eS1 (rps3a) of Dictyostelium discoideum (Social amoeba).